A 171-amino-acid polypeptide reads, in one-letter code: 3-hydroxydecanoyl-[acyl-carrier-protein] dehydratase (171 aa).

The active site involves histidine 70.

Belongs to the thioester dehydratase family. FabA subfamily. In terms of assembly, homodimer.

It localises to the cytoplasm. The catalysed reaction is a (3R)-hydroxyacyl-[ACP] = a (2E)-enoyl-[ACP] + H2O. It catalyses the reaction (3R)-hydroxydecanoyl-[ACP] = (2E)-decenoyl-[ACP] + H2O. It carries out the reaction (2E)-decenoyl-[ACP] = (3Z)-decenoyl-[ACP]. It participates in lipid metabolism; fatty acid biosynthesis. Functionally, necessary for the introduction of cis unsaturation into fatty acids. Catalyzes the dehydration of (3R)-3-hydroxydecanoyl-ACP to E-(2)-decenoyl-ACP and then its isomerization to Z-(3)-decenoyl-ACP. Can catalyze the dehydratase reaction for beta-hydroxyacyl-ACPs with saturated chain lengths up to 16:0, being most active on intermediate chain length. In Colwellia psychrerythraea (strain 34H / ATCC BAA-681) (Vibrio psychroerythus), this protein is 3-hydroxydecanoyl-[acyl-carrier-protein] dehydratase.